Reading from the N-terminus, the 112-residue chain is Nitrogen regulatory protein GlnK1 (112 aa).

Thr29 contributes to the ADP binding site. Positions 29 and 38 each coordinate ATP. 52–54 is a binding site for 2-oxoglutarate; sequence IVD. ADP contacts are provided by residues Val64, 88–90, and 101–103; these read DGK and RVR. Residues Val64, 86–90, and 101–103 each bind ATP; these read PGDGK and RVR.

The protein belongs to the P(II) protein family. In terms of assembly, homotrimer. Interacts and forms a complex with Amt1.

It is found in the cytoplasm. With respect to regulation, formation of the GlnK1/Amt1 complex is decreased in the presence of Mg-ATP or 2-oxoglutarate. The presence of both effectors abolishes the formation of the complex. Its function is as follows. Involved in the regulation of nitrogen metabolism. Regulates the activity of its targets by protein-protein interaction in response to the nitrogen status of the cell. Regulates the activity of the ammonia channel Amt1 via direct interaction. The polypeptide is Nitrogen regulatory protein GlnK1 (Methanocaldococcus jannaschii (strain ATCC 43067 / DSM 2661 / JAL-1 / JCM 10045 / NBRC 100440) (Methanococcus jannaschii)).